The chain runs to 361 residues: tRNA/tmRNA (uracil-C(5))-methyltransferase (361 aa).

Q185, Y213, N218, E234, and D294 together coordinate S-adenosyl-L-methionine. C319 serves as the catalytic Nucleophile. E353 serves as the catalytic Proton acceptor.

Belongs to the class I-like SAM-binding methyltransferase superfamily. RNA M5U methyltransferase family. TrmA subfamily.

It catalyses the reaction uridine(54) in tRNA + S-adenosyl-L-methionine = 5-methyluridine(54) in tRNA + S-adenosyl-L-homocysteine + H(+). The catalysed reaction is uridine(341) in tmRNA + S-adenosyl-L-methionine = 5-methyluridine(341) in tmRNA + S-adenosyl-L-homocysteine + H(+). Functionally, dual-specificity methyltransferase that catalyzes the formation of 5-methyluridine at position 54 (m5U54) in all tRNAs, and that of position 341 (m5U341) in tmRNA (transfer-mRNA). This is tRNA/tmRNA (uracil-C(5))-methyltransferase from Pseudomonas savastanoi pv. phaseolicola (strain 1448A / Race 6) (Pseudomonas syringae pv. phaseolicola (strain 1448A / Race 6)).